Consider the following 229-residue polypeptide: UPF0500 protein C1orf216 (229 aa).

The segment at 1 to 144 (MFAIQPGLAE…RGPGPPDPLL (144 aa)) is disordered. Residues 62 to 71 (SESPSDNQAF) are compositionally biased toward polar residues. Composition is skewed to low complexity over residues 84 to 93 (PPEGAEIPGA) and 115 to 126 (SSSLSIDSRSSS).

It belongs to the UPF0500 family.

This chain is UPF0500 protein C1orf216 (C1orf216), found in Homo sapiens (Human).